The sequence spans 295 residues: Ribosomal protein L11 methyltransferase (295 aa).

Positions 150, 171, 193, and 232 each coordinate S-adenosyl-L-methionine.

The protein belongs to the methyltransferase superfamily. PrmA family.

It is found in the cytoplasm. The catalysed reaction is L-lysyl-[protein] + 3 S-adenosyl-L-methionine = N(6),N(6),N(6)-trimethyl-L-lysyl-[protein] + 3 S-adenosyl-L-homocysteine + 3 H(+). Functionally, methylates ribosomal protein L11. This chain is Ribosomal protein L11 methyltransferase, found in Neisseria meningitidis serogroup B (strain ATCC BAA-335 / MC58).